Consider the following 310-residue polypeptide: Acetyl-coenzyme A carboxylase carboxyl transferase subunit beta, chloroplastic (310 aa).

In terms of domain architecture, CoA carboxyltransferase N-terminal spans 47–310 (LWARCDNCGN…LYLSVPYNKN (264 aa)). Residues Cys51, Cys54, Cys70, and Cys73 each coordinate Zn(2+). The C4-type zinc finger occupies 51–73 (CDNCGNMLYVKFLKQNRSVCEEC).

This sequence belongs to the AccD/PCCB family. In terms of assembly, acetyl-CoA carboxylase is a heterohexamer composed of biotin carboxyl carrier protein, biotin carboxylase and 2 subunits each of ACCase subunit alpha and ACCase plastid-coded subunit beta (accD). Requires Zn(2+) as cofactor.

The protein resides in the plastid. The protein localises to the chloroplast stroma. It catalyses the reaction N(6)-carboxybiotinyl-L-lysyl-[protein] + acetyl-CoA = N(6)-biotinyl-L-lysyl-[protein] + malonyl-CoA. Its pathway is lipid metabolism; malonyl-CoA biosynthesis; malonyl-CoA from acetyl-CoA: step 1/1. Functionally, component of the acetyl coenzyme A carboxylase (ACC) complex. Biotin carboxylase (BC) catalyzes the carboxylation of biotin on its carrier protein (BCCP) and then the CO(2) group is transferred by the transcarboxylase to acetyl-CoA to form malonyl-CoA. The protein is Acetyl-coenzyme A carboxylase carboxyl transferase subunit beta, chloroplastic of Adiantum capillus-veneris (Maidenhair fern).